A 467-amino-acid polypeptide reads, in one-letter code: Chromosomal replication initiator protein DnaA (467 aa).

Residues 1–87 (MSSSLWLQCL…VGSRPVVAPK (87 aa)) form a domain I, interacts with DnaA modulators region. Residues 87–130 (KPAPVRTAADVAAESSAPAQLAQRKPIHKTWDDDSAAADITHRS) form a domain II region. The tract at residues 131–347 (NVNPKHKFNN…GALNRVIANA (217 aa)) is domain III, AAA+ region. Residues Gly-175, Gly-177, Lys-178, and Thr-179 each contribute to the ATP site. Positions 348-467 (NFTGRPITID…YSNLIRTLSS (120 aa)) are domain IV, binds dsDNA.

It belongs to the DnaA family. Oligomerizes as a right-handed, spiral filament on DNA at oriC.

The protein localises to the cytoplasm. Its function is as follows. Plays an essential role in the initiation and regulation of chromosomal replication. ATP-DnaA binds to the origin of replication (oriC) to initiate formation of the DNA replication initiation complex once per cell cycle. Binds the DnaA box (a 9 base pair repeat at the origin) and separates the double-stranded (ds)DNA. Forms a right-handed helical filament on oriC DNA; dsDNA binds to the exterior of the filament while single-stranded (ss)DNA is stabiized in the filament's interior. The ATP-DnaA-oriC complex binds and stabilizes one strand of the AT-rich DNA unwinding element (DUE), permitting loading of DNA polymerase. After initiation quickly degrades to an ADP-DnaA complex that is not apt for DNA replication. Binds acidic phospholipids. In Vibrio cholerae serotype O1 (strain ATCC 39315 / El Tor Inaba N16961), this protein is Chromosomal replication initiator protein DnaA.